The primary structure comprises 128 residues: Sulfurtransferase TusD (128 aa).

Cysteine 78 acts as the Cysteine persulfide intermediate in catalysis.

Belongs to the DsrE/TusD family. In terms of assembly, heterohexamer, formed by a dimer of trimers. The hexameric TusBCD complex contains 2 copies each of TusB, TusC and TusD. The TusBCD complex interacts with TusE.

It localises to the cytoplasm. Part of a sulfur-relay system required for 2-thiolation of 5-methylaminomethyl-2-thiouridine (mnm(5)s(2)U) at tRNA wobble positions. Accepts sulfur from TusA and transfers it in turn to TusE. This Escherichia coli O7:K1 (strain IAI39 / ExPEC) protein is Sulfurtransferase TusD.